Consider the following 31-residue polypeptide: Cytochrome b6-f complex subunit 6 (31 aa).

A helical membrane pass occupies residues 7–25 (YSGFLLAAPIPASAPFTGL).

It belongs to the PetL family. The 4 large subunits of the cytochrome b6-f complex are cytochrome b6, subunit IV (17 kDa polypeptide, PetD), cytochrome f and the Rieske protein, while the 4 small subunits are PetG, PetL, PetM and PetN. The complex functions as a dimer.

It localises to the plastid. The protein resides in the chloroplast thylakoid membrane. Its function is as follows. Component of the cytochrome b6-f complex, which mediates electron transfer between photosystem II (PSII) and photosystem I (PSI), cyclic electron flow around PSI, and state transitions. PetL is important for photoautotrophic growth as well as for electron transfer efficiency and stability of the cytochrome b6-f complex. This Huperzia lucidula (Shining clubmoss) protein is Cytochrome b6-f complex subunit 6.